The following is a 369-amino-acid chain: Alanine racemase (369 aa).

Lysine 35 (proton acceptor; specific for D-alanine) is an active-site residue. Lysine 35 is subject to N6-(pyridoxal phosphate)lysine. Position 130 (arginine 130) interacts with substrate. Catalysis depends on tyrosine 257, which acts as the Proton acceptor; specific for L-alanine. Methionine 305 is a substrate binding site.

Belongs to the alanine racemase family. Pyridoxal 5'-phosphate serves as cofactor.

It carries out the reaction L-alanine = D-alanine. It functions in the pathway amino-acid biosynthesis; D-alanine biosynthesis; D-alanine from L-alanine: step 1/1. Its function is as follows. Catalyzes the interconversion of L-alanine and D-alanine. May also act on other amino acids. The polypeptide is Alanine racemase (alr) (Paracidovorax citrulli (strain AAC00-1) (Acidovorax citrulli)).